A 478-amino-acid chain; its full sequence is uncharacterized protein (478 aa).

A signal peptide spans 1 to 19 (MKLFPLCLSALVMSTATCA). Residues 20 to 214 (SSVEGAIEKV…VPVTLKLQRQ (195 aa)) are Lumenal-facing. Residues 215–235 (IFLSFSIVYGLISLWWAIRCI) form a helical membrane-spanning segment. Residues 236–240 (CSRTK) are Cytoplasmic-facing. The chain crosses the membrane as a helical span at residues 241-261 (LHLVQVCLFCWFSFFILNHPV). The Lumenal segment spans residues 262-289 (KQRIFSIDNPDEYLVPFVVSCFTYFLGD). Residues 290-310 (GIEYALYSLFITTTVLGFGTI) form a helical membrane-spanning segment. The Cytoplasmic portion of the chain corresponds to 311 to 317 (RRTSKKM). Residues 318–338 (VLFFSLLTCGQAFLVNVAPMV) traverse the membrane as a helical segment. At 339 to 356 (YPLLYISGSDKACVLRMV) the chain is on the lumenal side. The helical transmembrane segment at 357 to 377 (WVFNKFLYLPLITFLGAVLAF) threads the bilayer. Residues 378 to 391 (RFRLKKASQFDTRW) lie on the Cytoplasmic side of the membrane. A helical membrane pass occupies residues 392–412 (NLFALTLAIIILFAFNDLVIF). Residues 413 to 427 (DKLQKLWKYDDTTLE) are Lumenal-facing. The helical transmembrane segment at 428 to 448 (YLKIVNGGIKFVAFSILLGPY) threads the bilayer. Over 449–478 (SKLFAEPKSLQLDDFLGKHDGHKDPSLEKF) the chain is Cytoplasmic.

The protein resides in the endoplasmic reticulum membrane. It is found in the golgi apparatus membrane. This is an uncharacterized protein from Schizosaccharomyces pombe (strain 972 / ATCC 24843) (Fission yeast).